A 192-amino-acid chain; its full sequence is Xanthine phosphoribosyltransferase (192 aa).

Residues Leu20 and Asn27 each coordinate xanthine. 128 to 132 is a binding site for 5-phospho-alpha-D-ribose 1-diphosphate; sequence ANGDA. Lys156 provides a ligand contact to xanthine.

Belongs to the purine/pyrimidine phosphoribosyltransferase family. Xpt subfamily. Homodimer.

It is found in the cytoplasm. It catalyses the reaction XMP + diphosphate = xanthine + 5-phospho-alpha-D-ribose 1-diphosphate. It functions in the pathway purine metabolism; XMP biosynthesis via salvage pathway; XMP from xanthine: step 1/1. Functionally, converts the preformed base xanthine, a product of nucleic acid breakdown, to xanthosine 5'-monophosphate (XMP), so it can be reused for RNA or DNA synthesis. This Staphylococcus aureus (strain MRSA252) protein is Xanthine phosphoribosyltransferase.